We begin with the raw amino-acid sequence, 461 residues long: Cytochrome c biogenesis protein CcsB (461 aa).

A run of 3 helical transmembrane segments spans residues 32–52 (LRLAIALLLIIALFSISGTVI), 91–111 (TWWFLSLLVLFGTSLTACTFT), and 178–198 (IGPIIVHIGIVTILLGSIWGA).

It belongs to the Ccs1/CcsB family. As to quaternary structure, may interact with CcsA.

Its subcellular location is the cellular thylakoid membrane. Its function is as follows. Required during biogenesis of c-type cytochromes (cytochrome c6 and cytochrome f) at the step of heme attachment. This chain is Cytochrome c biogenesis protein CcsB, found in Trichormus variabilis (strain ATCC 29413 / PCC 7937) (Anabaena variabilis).